Consider the following 241-residue polypeptide: Eukaryotic translation initiation factor 3 subunit J (241 aa).

The segment covering 1–27 (MEEDWEQHGEKEEVPLPAKKPDANKWD) has biased composition (basic and acidic residues). The interval 1–99 (MEEDWEQHGE…ENMTPEQKLA (99 aa)) is disordered. Over residues 28-45 (GEDEEEEVKDSWEDEDEL) the composition is skewed to acidic residues. A coiled-coil region spans residues 31-119 (EEEEVKDSWE…ESDLKNALDT (89 aa)). Basic and acidic residues-rich tracts occupy residues 46–58 (EEKK…ETPK) and 69–90 (IVEK…KEAE).

This sequence belongs to the eIF-3 subunit J family. In terms of assembly, component of the eukaryotic translation initiation factor 3 (eIF-3) complex.

The protein resides in the cytoplasm. In terms of biological role, component of the eukaryotic translation initiation factor 3 (eIF-3) complex, which is involved in protein synthesis of a specialized repertoire of mRNAs and, together with other initiation factors, stimulates binding of mRNA and methionyl-tRNAi to the 40S ribosome. The eIF-3 complex specifically targets and initiates translation of a subset of mRNAs involved in cell proliferation. The polypeptide is Eukaryotic translation initiation factor 3 subunit J (Culex quinquefasciatus (Southern house mosquito)).